The primary structure comprises 777 residues: Myotubularin-related protein 10 (777 aa).

Residues 196-217 (PSGDGGGGGGGGNGAGGGSSQK) are disordered. Over residues 197–214 (SGDGGGGGGGGNGAGGGS) the composition is skewed to gly residues. The Myotubularin phosphatase domain maps to 221-661 (FETYSDWDRE…THIKLWKLCY (441 aa)). Phosphoserine is present on residues Ser-607 and Ser-751.

It belongs to the protein-tyrosine phosphatase family. Non-receptor class myotubularin subfamily.

The protein is Myotubularin-related protein 10 (MTMR10) of Homo sapiens (Human).